Consider the following 379-residue polypeptide: Carbamoyl phosphate synthase small chain (379 aa).

Positions 1–189 (MSKSALLVLE…GLPEAKADSE (189 aa)) are CPSase. 3 residues coordinate L-glutamine: serine 47, glycine 241, and glycine 243. One can recognise a Glutamine amidotransferase type-1 domain in the interval 193–379 (HVVAYDFGAK…FIELIKQFRA (187 aa)). Cysteine 269 acts as the Nucleophile in catalysis. L-glutamine-binding residues include leucine 270, glutamine 273, asparagine 311, glycine 313, and phenylalanine 314. Active-site residues include histidine 353 and glutamate 355.

It belongs to the CarA family. Composed of two chains; the small (or glutamine) chain promotes the hydrolysis of glutamine to ammonia, which is used by the large (or ammonia) chain to synthesize carbamoyl phosphate. Tetramer of heterodimers (alpha,beta)4.

The enzyme catalyses hydrogencarbonate + L-glutamine + 2 ATP + H2O = carbamoyl phosphate + L-glutamate + 2 ADP + phosphate + 2 H(+). It catalyses the reaction L-glutamine + H2O = L-glutamate + NH4(+). The protein operates within amino-acid biosynthesis; L-arginine biosynthesis; carbamoyl phosphate from bicarbonate: step 1/1. It participates in pyrimidine metabolism; UMP biosynthesis via de novo pathway; (S)-dihydroorotate from bicarbonate: step 1/3. Small subunit of the glutamine-dependent carbamoyl phosphate synthetase (CPSase). CPSase catalyzes the formation of carbamoyl phosphate from the ammonia moiety of glutamine, carbonate, and phosphate donated by ATP, constituting the first step of 2 biosynthetic pathways, one leading to arginine and/or urea and the other to pyrimidine nucleotides. The small subunit (glutamine amidotransferase) binds and cleaves glutamine to supply the large subunit with the substrate ammonia. This chain is Carbamoyl phosphate synthase small chain, found in Vibrio cholerae serotype O1 (strain ATCC 39315 / El Tor Inaba N16961).